A 985-amino-acid chain; its full sequence is NAD kinase 2, chloroplastic (985 aa).

Residues 1 to 62 (MFLCFCPCHV…KRRLRFVIRA (62 aa)) constitute a chloroplast transit peptide. The interval 335–380 (APKAEQVELFASIVSDSSKRPIYVHSKEGVWRTSAMVSRWKQYMTR) is calmodulin-binding. Disordered stretches follow at residues 389–466 (SEES…PPGN) and 548–615 (FSNG…DEAG). 2 stretches are compositionally biased toward basic and acidic residues: residues 390 to 399 (EESKRREVSE) and 413 to 429 (VPDE…EVDS). Over residues 548 to 569 (FSNGNVHASDNTNKSISDNRGN) the composition is skewed to polar residues.

The protein belongs to the NAD kinase family. As to expression, expressed in leaves.

Its subcellular location is the plastid. The protein resides in the chloroplast. The catalysed reaction is NAD(+) + ATP = ADP + NADP(+) + H(+). Involved in chlorophyll synthesis and chloroplast protection against oxidative damage. The polypeptide is NAD kinase 2, chloroplastic (NADK2) (Arabidopsis thaliana (Mouse-ear cress)).